Here is a 316-residue protein sequence, read N- to C-terminus: Sorting nexin-20 (316 aa).

A disordered region spans residues 1-57; it reads MASHKHPGSPGWTGPICQDMAGTTPKASAPRPDLPRPGPEDHLEAQGSPSSNSSMTT. Residue Ser-3 is modified to Phosphoserine. Residues 47–57 are compositionally biased toward polar residues; the sequence is GSPSSNSSMTT. A PX domain is found at 74 to 191; it reads VKLLFEIASA…DFLTRPELKE (118 aa). A 1,2-diacyl-sn-glycero-3-phospho-(1D-myo-inositol-3-phosphate) is bound by residues Arg-116, Ser-118, Lys-143, and Arg-157.

The protein belongs to the sorting nexin family. As to quaternary structure, interacts with SELPLG. Interaction with SELPLG is controversial.

The protein localises to the early endosome membrane. It localises to the cell membrane. The protein resides in the cytoplasm. Its subcellular location is the nucleus. Functionally, may play a role in cellular vesicle trafficking. Has been proposed to function as a sorting protein that targets SELPLG into endosomes, but has no effect on SELPLG internalization from the cell surface, or on SELPLG-mediated cell-cell adhesion. This Bos taurus (Bovine) protein is Sorting nexin-20 (SNX20).